We begin with the raw amino-acid sequence, 33 residues long: Ranatuerin-1T (33 aa).

An intrachain disulfide couples cysteine 27 to cysteine 33.

In terms of tissue distribution, expressed by the skin glands.

The protein localises to the secreted. Its function is as follows. Antibacterial activity against Gram-positive bacterium S.aureus and Gram-negative bacterium E.coli. No activity against C.albicans. The polypeptide is Ranatuerin-1T (Rana temporaria (European common frog)).